Here is a 473-residue protein sequence, read N- to C-terminus: Protein nucleotidyltransferase YdiU (473 aa).

ATP is bound by residues Gly-79, Gly-81, Arg-82, Lys-102, Asp-114, Gly-115, Arg-165, and Arg-172. Asp-241 serves as the catalytic Proton acceptor. Mg(2+)-binding residues include Asn-242 and Asp-251. ATP is bound at residue Asp-251.

It belongs to the SELO family. The cofactor is Mg(2+). Mn(2+) serves as cofactor.

The enzyme catalyses L-seryl-[protein] + ATP = 3-O-(5'-adenylyl)-L-seryl-[protein] + diphosphate. It catalyses the reaction L-threonyl-[protein] + ATP = 3-O-(5'-adenylyl)-L-threonyl-[protein] + diphosphate. The catalysed reaction is L-tyrosyl-[protein] + ATP = O-(5'-adenylyl)-L-tyrosyl-[protein] + diphosphate. It carries out the reaction L-histidyl-[protein] + UTP = N(tele)-(5'-uridylyl)-L-histidyl-[protein] + diphosphate. The enzyme catalyses L-seryl-[protein] + UTP = O-(5'-uridylyl)-L-seryl-[protein] + diphosphate. It catalyses the reaction L-tyrosyl-[protein] + UTP = O-(5'-uridylyl)-L-tyrosyl-[protein] + diphosphate. Functionally, nucleotidyltransferase involved in the post-translational modification of proteins. It can catalyze the addition of adenosine monophosphate (AMP) or uridine monophosphate (UMP) to a protein, resulting in modifications known as AMPylation and UMPylation. The chain is Protein nucleotidyltransferase YdiU from Marinomonas sp. (strain MWYL1).